A 696-amino-acid chain; its full sequence is uncharacterized protein (696 aa).

Residues 293 to 426 enclose the GGDEF domain; that stretch reads SVLGLVLLGF…GSRQYCFYEE (134 aa). The region spanning 435 to 689 is the EAL domain; that stretch reads RIQLEHALHQ…EITAFLAEGN (255 aa).

This is an uncharacterized protein from Synechocystis sp. (strain ATCC 27184 / PCC 6803 / Kazusa).